The following is a 354-amino-acid chain: UDP-3-O-acylglucosamine N-acyltransferase (354 aa).

His-245 (proton acceptor) is an active-site residue.

It belongs to the transferase hexapeptide repeat family. LpxD subfamily. In terms of assembly, homotrimer.

The enzyme catalyses a UDP-3-O-[(3R)-3-hydroxyacyl]-alpha-D-glucosamine + a (3R)-hydroxyacyl-[ACP] = a UDP-2-N,3-O-bis[(3R)-3-hydroxyacyl]-alpha-D-glucosamine + holo-[ACP] + H(+). The protein operates within bacterial outer membrane biogenesis; LPS lipid A biosynthesis. In terms of biological role, catalyzes the N-acylation of UDP-3-O-acylglucosamine using 3-hydroxyacyl-ACP as the acyl donor. Is involved in the biosynthesis of lipid A, a phosphorylated glycolipid that anchors the lipopolysaccharide to the outer membrane of the cell. In Anaeromyxobacter dehalogenans (strain 2CP-1 / ATCC BAA-258), this protein is UDP-3-O-acylglucosamine N-acyltransferase.